Reading from the N-terminus, the 361-residue chain is Chorismate synthase (361 aa).

Residues R48 and R54 each coordinate NADP(+). FMN-binding positions include 125–127 (RSS), 238–239 (NA), G278, 293–297 (KPTSS), and R319.

This sequence belongs to the chorismate synthase family. Homotetramer. FMNH2 serves as cofactor.

The catalysed reaction is 5-O-(1-carboxyvinyl)-3-phosphoshikimate = chorismate + phosphate. It functions in the pathway metabolic intermediate biosynthesis; chorismate biosynthesis; chorismate from D-erythrose 4-phosphate and phosphoenolpyruvate: step 7/7. In terms of biological role, catalyzes the anti-1,4-elimination of the C-3 phosphate and the C-6 proR hydrogen from 5-enolpyruvylshikimate-3-phosphate (EPSP) to yield chorismate, which is the branch point compound that serves as the starting substrate for the three terminal pathways of aromatic amino acid biosynthesis. This reaction introduces a second double bond into the aromatic ring system. The polypeptide is Chorismate synthase (Salmonella dublin (strain CT_02021853)).